Consider the following 252-residue polypeptide: Ribosomal RNA small subunit methyltransferase J (252 aa).

S-adenosyl-L-methionine-binding positions include 101–102 (RD), 117–118 (ER), 153–154 (SS), and aspartate 171.

It belongs to the methyltransferase superfamily. RsmJ family.

The protein resides in the cytoplasm. The enzyme catalyses guanosine(1516) in 16S rRNA + S-adenosyl-L-methionine = N(2)-methylguanosine(1516) in 16S rRNA + S-adenosyl-L-homocysteine + H(+). Its function is as follows. Specifically methylates the guanosine in position 1516 of 16S rRNA. The protein is Ribosomal RNA small subunit methyltransferase J of Salmonella paratyphi B (strain ATCC BAA-1250 / SPB7).